We begin with the raw amino-acid sequence, 719 residues long: MSDISVEKLTELEAAAELERLARAIAHHDELYHAKDRPEISDAAYDALKRRNEAIEAHFPALVRDDSPSRRVGAAPALATFAPVVHARPMLSLDNAFSDEDVRDFVGSVYRFLGQLPDDSIAFTAEPKIDGLSMSIRYENGILVSGATRGDGTTGENVTANIRTIAEIPNRLPAGAPAVVEVRGEVYMAKSDFLTLNAQMEAEGKQTYVNPRNTAAGSLRQLDAKVTASRKLRFFAYAWGEMSDMPVDTQLGMVEVFRQWGFPVNPLMKRFNSVDGLLAHYRAIGMERPTLDYDIDGVVYKVDRLDLQTRLGFRSRSPRWAIAHKFPAEQALTILRGIDIQVGRTGALTPVARLEPITVGGVVVTNATLHNEDYIKGIGQKGEPIREGRDIRIGDSVIVQRAGDVIPQIVDVVLEEGKKRGEPYQFPHVCPACGSHAVREEGEAVRRCTGGLICPAQAVERIRHFVSRNAFDIEGLGEKQVEFFFNAEDPALCIRSPADIFTLKKRQENSLTKLQNIEGFGATSVKKLYDAIDARREIALHRFLFGLGIRHVGEVNAKRLARAYLSYAAFEKAALEAVPPKEGDRTDKGSEAWQDMLAVEGIGSIVAEAVVDFYGEPHNREVLAALLAEVTPLDEEARVATGSPVEGKTVVFTGSLERMSRDEAKAMAERHGAKTAGSVSKKTDLVVAGPGAGSKLAKATELGIEVINEDDWFKLVGED.

NAD(+) is bound by residues 42–46, 92–93, and Glu-126; these read DAAYD and SL. Lys-128 serves as the catalytic N6-AMP-lysine intermediate. NAD(+) contacts are provided by Arg-149, Glu-185, Lys-301, and Lys-325. Positions 430, 433, 448, and 454 each coordinate Zn(2+). The 80-residue stretch at 640 to 719 folds into the BRCT domain; it reads ATGSPVEGKT…DDWFKLVGED (80 aa).

The protein belongs to the NAD-dependent DNA ligase family. LigA subfamily. The cofactor is Mg(2+). Requires Mn(2+) as cofactor.

The catalysed reaction is NAD(+) + (deoxyribonucleotide)n-3'-hydroxyl + 5'-phospho-(deoxyribonucleotide)m = (deoxyribonucleotide)n+m + AMP + beta-nicotinamide D-nucleotide.. Its function is as follows. DNA ligase that catalyzes the formation of phosphodiester linkages between 5'-phosphoryl and 3'-hydroxyl groups in double-stranded DNA using NAD as a coenzyme and as the energy source for the reaction. It is essential for DNA replication and repair of damaged DNA. The protein is DNA ligase of Brucella ovis (strain ATCC 25840 / 63/290 / NCTC 10512).